Here is a 427-residue protein sequence, read N- to C-terminus: Enolase (427 aa).

(2R)-2-phosphoglycerate is bound at residue Gln163. The Proton donor role is filled by Glu205. The Mg(2+) site is built by Asp242, Glu285, and Asp312. Residues Lys337, Arg366, Ser367, and Lys388 each contribute to the (2R)-2-phosphoglycerate site. The Proton acceptor role is filled by Lys337.

This sequence belongs to the enolase family. Requires Mg(2+) as cofactor.

Its subcellular location is the cytoplasm. The protein resides in the secreted. It is found in the cell surface. The enzyme catalyses (2R)-2-phosphoglycerate = phosphoenolpyruvate + H2O. It functions in the pathway carbohydrate degradation; glycolysis; pyruvate from D-glyceraldehyde 3-phosphate: step 4/5. Catalyzes the reversible conversion of 2-phosphoglycerate (2-PG) into phosphoenolpyruvate (PEP). It is essential for the degradation of carbohydrates via glycolysis. The polypeptide is Enolase (Bradyrhizobium sp. (strain ORS 278)).